Here is a 397-residue protein sequence, read N- to C-terminus: Ribosomal RNA large subunit methyltransferase I (397 aa).

Positions Ala2 to Phe80 constitute a PUA domain.

This sequence belongs to the methyltransferase superfamily. RlmI family.

It localises to the cytoplasm. It catalyses the reaction cytidine(1962) in 23S rRNA + S-adenosyl-L-methionine = 5-methylcytidine(1962) in 23S rRNA + S-adenosyl-L-homocysteine + H(+). Functionally, specifically methylates the cytosine at position 1962 (m5C1962) of 23S rRNA. This chain is Ribosomal RNA large subunit methyltransferase I, found in Shewanella denitrificans (strain OS217 / ATCC BAA-1090 / DSM 15013).